A 343-amino-acid chain; its full sequence is Ribosomal RNA small subunit methyltransferase C (343 aa).

Belongs to the methyltransferase superfamily. RsmC family. As to quaternary structure, monomer.

It is found in the cytoplasm. The enzyme catalyses guanosine(1207) in 16S rRNA + S-adenosyl-L-methionine = N(2)-methylguanosine(1207) in 16S rRNA + S-adenosyl-L-homocysteine + H(+). Functionally, specifically methylates the guanine in position 1207 of 16S rRNA in the 30S particle. The chain is Ribosomal RNA small subunit methyltransferase C from Escherichia coli O1:K1 / APEC.